A 136-amino-acid chain; its full sequence is S-protein homolog 25 (136 aa).

The signal sequence occupies residues 1–20; that stretch reads MNHSVFVILITITYFGLNQA. N-linked (GlcNAc...) asparagine glycosylation is found at asparagine 71 and asparagine 84.

This sequence belongs to the plant self-incompatibility (S1) protein family.

It localises to the secreted. In Arabidopsis thaliana (Mouse-ear cress), this protein is S-protein homolog 25.